The following is a 250-amino-acid chain: MRVDLNCDLGEAFGNYSFGGDHQIIPLITSANVACGFHAGDENVMNETVKLAKAHNVAVGAHPGLPDLKGFGRRNIDISNDEIYNLMIYQLGALQGFCRIHQVKINHVKPHGALYQMGAKDREIANVIAQAVYDFDPSLVLVGLANSYLISEAKNVGLITASEVFADRRYEDDGQLVSRKESDAVITDTDEALKQVLKMVKENKVISKNNKEVTLQADTICVHGDGEHALLFVSKIREILMKEGIDIQSL.

The protein belongs to the LamB/PxpA family. Forms a complex composed of PxpA, PxpB and PxpC.

The enzyme catalyses 5-oxo-L-proline + ATP + 2 H2O = L-glutamate + ADP + phosphate + H(+). Its function is as follows. Catalyzes the cleavage of 5-oxoproline to form L-glutamate coupled to the hydrolysis of ATP to ADP and inorganic phosphate. In Staphylococcus aureus (strain NCTC 8325 / PS 47), this protein is 5-oxoprolinase subunit A.